The chain runs to 102 residues: Large ribosomal subunit protein uL24 (102 aa).

Belongs to the universal ribosomal protein uL24 family. Part of the 50S ribosomal subunit.

Its function is as follows. One of two assembly initiator proteins, it binds directly to the 5'-end of the 23S rRNA, where it nucleates assembly of the 50S subunit. One of the proteins that surrounds the polypeptide exit tunnel on the outside of the subunit. The chain is Large ribosomal subunit protein uL24 from Burkholderia ambifaria (strain ATCC BAA-244 / DSM 16087 / CCUG 44356 / LMG 19182 / AMMD) (Burkholderia cepacia (strain AMMD)).